Reading from the N-terminus, the 127-residue chain is Small ribosomal subunit protein bS6 (127 aa).

This sequence belongs to the bacterial ribosomal protein bS6 family.

Its function is as follows. Binds together with bS18 to 16S ribosomal RNA. This is Small ribosomal subunit protein bS6 from Acinetobacter baumannii (strain AB0057).